We begin with the raw amino-acid sequence, 525 residues long: GMP synthase [glutamine-hydrolyzing] (525 aa).

A Glutamine amidotransferase type-1 domain is found at 9–207; that stretch reads RILILDFGSQ…VLDICACEAL (199 aa). The active-site Nucleophile is C86. Residues H181 and E183 contribute to the active site. A GMPS ATP-PPase domain is found at 208 to 400; that stretch reads WTPATIIEDA…LGLPYDMLYR (193 aa). 235–241 is a binding site for ATP; the sequence is SGGVDSS.

Homodimer.

The enzyme catalyses XMP + L-glutamine + ATP + H2O = GMP + L-glutamate + AMP + diphosphate + 2 H(+). It functions in the pathway purine metabolism; GMP biosynthesis; GMP from XMP (L-Gln route): step 1/1. Catalyzes the synthesis of GMP from XMP. The chain is GMP synthase [glutamine-hydrolyzing] from Yersinia enterocolitica serotype O:8 / biotype 1B (strain NCTC 13174 / 8081).